Reading from the N-terminus, the 113-residue chain is Chaperone protein SigE (113 aa).

It belongs to the IpgE/SigE chaperone family. In terms of assembly, homodimer or higher-order oligomers.

Its subcellular location is the cytoplasm. Functionally, molecular chaperone required for SopB/SigD stabilization and secretion. The protein is Chaperone protein SigE (sigE) of Salmonella paratyphi A (strain ATCC 9150 / SARB42).